The sequence spans 334 residues: Acryloyl-coenzyme A reductase (334 aa).

A Zn(2+)-binding site is contributed by Cys38. NADP(+) is bound at residue Tyr39. His60, Asp90, Cys93, Cys96, Cys104, and Cys146 together coordinate Zn(2+). NADP(+) is bound by residues 173-176 (SGGV) and 195-197 (TTS).

Belongs to the zinc-containing alcohol dehydrogenase family. In terms of assembly, monomer. Requires Zn(2+) as cofactor.

It carries out the reaction propanoyl-CoA + NADP(+) = acryloyl-CoA + NADPH + H(+). In terms of biological role, plays a role in autotrophic carbon fixation via the 3-hydroxypropionate/4-hydroxybutyrate cycle. Catalyzes the acryloyl-CoA dependent NADPH oxidation and formation of propionyl-CoA. Inactive towards 3-hydroxypropionyl-CoA, NADH and crotonyl-CoA. This is Acryloyl-coenzyme A reductase from Sulfurisphaera tokodaii (strain DSM 16993 / JCM 10545 / NBRC 100140 / 7) (Sulfolobus tokodaii).